A 680-amino-acid chain; its full sequence is Multisubstrate pseudouridine synthase 7 (680 aa).

Composition is skewed to basic and acidic residues over residues 1 to 30 (MSQE…RNGL) and 99 to 116 (ILSK…KDSS). Disordered stretches follow at residues 1-42 (MSQE…DLSG), 99-136 (ILSK…EPAT), and 206-229 (TKGN…RRDP). Residues 206 to 216 (TKGNGTFTVSK) show a composition bias toward polar residues. D277 functions as the Nucleophile in the catalytic mechanism. One can recognise a TRUD domain in the interval 358–596 (GFINYFGLQR…PGDYRKLLVR (239 aa)).

The protein belongs to the pseudouridine synthase TruD family.

The protein localises to the nucleus. Its subcellular location is the cytoplasm. It catalyses the reaction uridine in 5S rRNA = pseudouridine in 5S rRNA. The enzyme catalyses uridine in snRNA = pseudouridine in snRNA. The catalysed reaction is uridine(13) in tRNA = pseudouridine(13) in tRNA. It carries out the reaction a uridine in mRNA = a pseudouridine in mRNA. Catalyzes pseudouridylation at position 35 in U2 snRNA stem-loop II region which induces particular conformation of the mRNA-U2 snRNA duplex and places the nucleophile in an accessible position for the first step of splicing. Also catalyzes pseudouridylation at position 56 in U2 snRNA. Also catalyzes pseudouridylation at position 50 in 5S rRNA, position 13 in cytoplasmic tRNAs, and position 35 in pre-tRNA(Tyr). Pseudouridine residues in tRNAs may stabilize the local RNA conformation, favor interactions with protein partners and play an important role in the stabilization of the codon-anticodon interaction with mRNA. Also catalyzes pseudouridylation of mRNAs in response to heat shock: mediates pseudouridylation of mRNAs with the consensus sequence 5'-UGUAR-3'. This chain is Multisubstrate pseudouridine synthase 7 (pus7), found in Schizosaccharomyces pombe (strain 972 / ATCC 24843) (Fission yeast).